A 502-amino-acid chain; its full sequence is L-arabinose isomerase (502 aa).

Mn(2+) contacts are provided by Glu306, Glu333, His350, and His449.

This sequence belongs to the arabinose isomerase family. The cofactor is Mn(2+).

It catalyses the reaction beta-L-arabinopyranose = L-ribulose. The protein operates within carbohydrate degradation; L-arabinose degradation via L-ribulose; D-xylulose 5-phosphate from L-arabinose (bacterial route): step 1/3. In terms of biological role, catalyzes the conversion of L-arabinose to L-ribulose. This chain is L-arabinose isomerase, found in Flavobacterium johnsoniae (strain ATCC 17061 / DSM 2064 / JCM 8514 / BCRC 14874 / CCUG 350202 / NBRC 14942 / NCIMB 11054 / UW101) (Cytophaga johnsonae).